We begin with the raw amino-acid sequence, 246 residues long: Exosome complex component Rrp41 (246 aa).

Belongs to the RNase PH family. Rrp41 subfamily. As to quaternary structure, component of the archaeal exosome complex. Forms a hexameric ring-like arrangement composed of 3 Rrp41-Rrp42 heterodimers. The hexameric ring associates with a trimer of Rrp4 and/or Csl4 subunits.

The protein resides in the cytoplasm. Its function is as follows. Catalytic component of the exosome, which is a complex involved in RNA degradation. Has 3'-&gt;5' exoribonuclease activity. Can also synthesize heteromeric RNA-tails. In Pyrobaculum arsenaticum (strain DSM 13514 / JCM 11321 / PZ6), this protein is Exosome complex component Rrp41.